We begin with the raw amino-acid sequence, 333 residues long: Protein FLAP1 homolog A (333 aa).

Residues 26-46 traverse the membrane as a helical segment; that stretch reads VVIIFVLAFTLVFTPTFEAEA. The disordered stretch occupies residues 53 to 74; sequence IGGGSFRAPSAPSRSYSGPSGG. A compositionally biased stretch (low complexity) spans 58 to 70; it reads FRAPSAPSRSYSG. A run of 2 helical transmembrane segments spans residues 92–112 and 261–281; these read IIPFFGFGGGFGGIFGILVMI and GEYILVTIIAAALGNLNLPAV.

This sequence belongs to the FLAP family.

Its subcellular location is the cellular thylakoid membrane. The protein resides in the cell inner membrane. In terms of biological role, essential for photosynthetic growth under fluctuating light by modulating PxcA- and PxcL-dependent intracellular pH regulation via proton transport (e.g. transient pH reduction upon transition from dark to light followed by an increase in the light until light-to-dark shift). This Synechocystis sp. (strain ATCC 27184 / PCC 6803 / Kazusa) protein is Protein FLAP1 homolog A.